The sequence spans 365 residues: Flagellar P-ring protein (365 aa).

Positions 1 to 19 (MFKALAGIVLALVATLAHA) are cleaved as a signal peptide.

The protein belongs to the FlgI family. As to quaternary structure, the basal body constitutes a major portion of the flagellar organelle and consists of four rings (L,P,S, and M) mounted on a central rod.

It localises to the periplasm. Its subcellular location is the bacterial flagellum basal body. Functionally, assembles around the rod to form the L-ring and probably protects the motor/basal body from shearing forces during rotation. This chain is Flagellar P-ring protein, found in Salmonella heidelberg (strain SL476).